The following is a 154-amino-acid chain: D-aminoacyl-tRNA deacylase (154 aa).

The Gly-cisPro motif, important for rejection of L-amino acids signature appears at Gly142–Pro143.

The protein belongs to the DTD family. In terms of assembly, homodimer.

The protein resides in the cytoplasm. It carries out the reaction glycyl-tRNA(Ala) + H2O = tRNA(Ala) + glycine + H(+). The catalysed reaction is a D-aminoacyl-tRNA + H2O = a tRNA + a D-alpha-amino acid + H(+). Its function is as follows. An aminoacyl-tRNA editing enzyme that deacylates mischarged D-aminoacyl-tRNAs. Also deacylates mischarged glycyl-tRNA(Ala), protecting cells against glycine mischarging by AlaRS. Acts via tRNA-based rather than protein-based catalysis; rejects L-amino acids rather than detecting D-amino acids in the active site. By recycling D-aminoacyl-tRNA to D-amino acids and free tRNA molecules, this enzyme counteracts the toxicity associated with the formation of D-aminoacyl-tRNA entities in vivo and helps enforce protein L-homochirality. The chain is D-aminoacyl-tRNA deacylase from Polaromonas sp. (strain JS666 / ATCC BAA-500).